The sequence spans 573 residues: Sulfite reductase [NADPH] hemoprotein beta-component (573 aa).

C436, C442, C481, and C485 together coordinate [4Fe-4S] cluster. C485 contributes to the siroheme binding site.

This sequence belongs to the nitrite and sulfite reductase 4Fe-4S domain family. As to quaternary structure, alpha(8)-beta(8). The alpha component is a flavoprotein, the beta component is a hemoprotein. Siroheme serves as cofactor. Requires [4Fe-4S] cluster as cofactor.

The catalysed reaction is hydrogen sulfide + 3 NADP(+) + 3 H2O = sulfite + 3 NADPH + 4 H(+). Its pathway is sulfur metabolism; hydrogen sulfide biosynthesis; hydrogen sulfide from sulfite (NADPH route): step 1/1. Its function is as follows. Component of the sulfite reductase complex that catalyzes the 6-electron reduction of sulfite to sulfide. This is one of several activities required for the biosynthesis of L-cysteine from sulfate. The polypeptide is Sulfite reductase [NADPH] hemoprotein beta-component (Alteromonas mediterranea (strain DSM 17117 / CIP 110805 / LMG 28347 / Deep ecotype)).